The sequence spans 108 residues: MDQFECINVADAHQKLQEKEAVLVDIRDPQSFAMGHAVQAFHLTNDTLGAFMRDNDFDTPVMVMCYHGNSSKGAAQYLLQQGYDVVYSIDGGFEAWQRQFPAEVAYGA.

One can recognise a Rhodanese domain in the interval 17 to 105 (QEKEAVLVDI…WQRQFPAEVA (89 aa)). Cys-65 functions as the Cysteine persulfide intermediate in the catalytic mechanism.

It belongs to the GlpE family.

It is found in the cytoplasm. It carries out the reaction thiosulfate + hydrogen cyanide = thiocyanate + sulfite + 2 H(+). The catalysed reaction is thiosulfate + [thioredoxin]-dithiol = [thioredoxin]-disulfide + hydrogen sulfide + sulfite + 2 H(+). Its function is as follows. Transferase that catalyzes the transfer of sulfur from thiosulfate to thiophilic acceptors such as cyanide or dithiols. May function in a CysM-independent thiosulfate assimilation pathway by catalyzing the conversion of thiosulfate to sulfite, which can then be used for L-cysteine biosynthesis. The chain is Thiosulfate sulfurtransferase GlpE from Escherichia coli O139:H28 (strain E24377A / ETEC).